Here is a 470-residue protein sequence, read N- to C-terminus: Serine/threonine-protein kinase-like protein At1g28390 (470 aa).

In terms of domain architecture, Protein kinase spans 52-333 (FSANNFLGKG…LEVVECLKTV (282 aa)). ATP-binding positions include 58 to 66 (LGKGSHGRV) and lysine 81. Catalysis depends on aspartate 186, which acts as the Proton acceptor. Residues threonine 221 and threonine 226 each carry the phosphothreonine modification. Position 234 is a phosphotyrosine (tyrosine 234).

The protein belongs to the protein kinase superfamily. Ser/Thr protein kinase family.

It carries out the reaction L-seryl-[protein] + ATP = O-phospho-L-seryl-[protein] + ADP + H(+). It catalyses the reaction L-threonyl-[protein] + ATP = O-phospho-L-threonyl-[protein] + ADP + H(+). In Arabidopsis thaliana (Mouse-ear cress), this protein is Serine/threonine-protein kinase-like protein At1g28390.